We begin with the raw amino-acid sequence, 698 residues long: MGFAVESRSHVKDILGLINTFNEVKKITVDGTTPITVAHVAALARRHDVKVALEAEQCRARVETCSSWVQRKAEDGADIYGVTTGFGACSSRRTNQLSELQESLIRCLLAGVFTKGCASSVDELPATATRSAMLLRLNSFTYGCSGIRWEVMEALEKLLNSNVSPKVPLRGSVSASGDLIPLAYIAGLLIGKPSVVARIGDDVEVPAPEALSRVGLRPFKLQAKEGLALVNGTSFATALASTVMYDANVLLLLVETLCGMFCEVIFGREEFAHPLIHKVKPHPGQIESAELLEWLLRSSPFQDLSREYYSIDKLKKPKQDRYALRSSPQWLAPLVQTIRDATTTVETEVNSANDNPIIDHANDRALHGANFQGSAVGFYMDYVRIAVAGLGKLLFAQFTELMIEYYSNGLPGNLSLGPDLSVDYGLKGLDIAMAAYSSELQYLANPVTTHVHSAEQHNQDINSLALISARKTEEALDILKLMIASHLTAMCQAVDLRQLEEALVKVVENVVSTLADECGLPNDTKARLLYVAKAVPVYTYLESPCDPTLPLLLGLEQSCFGSILALHKKDGIETDTLVDRLAEFEKRLSDRLENEMTAVRVLYEKKGHKTADNNDALVRIQGSRFLPFYRFVREELDTGVMSARREQTPQEDVQKVFDAIADGRITVPLLHCLQGFLGQPNGCANGVESFQSVWNKSA.

The active-site Proton donor/acceptor is the Tyr-80. The 5-imidazolinone (Ala-Gly) cross-link spans 175-177 (ASG). 2,3-didehydroalanine (Ser) is present on Ser-176. Positions 231, 319, 325, 355, 427, 455, and 458 each coordinate (E)-cinnamate.

Belongs to the PAL/histidase family. As to quaternary structure, homotetramer. Post-translationally, contains an active site 4-methylidene-imidazol-5-one (MIO), which is formed autocatalytically by cyclization and dehydration of residues Ala-Ser-Gly.

It is found in the cytoplasm. It carries out the reaction L-phenylalanine = L-beta-phenylalanine. The catalysed reaction is L-phenylalanine = (E)-cinnamate + NH4(+). It participates in alkaloid biosynthesis; taxol biosynthesis. The protein operates within phenylpropanoid metabolism; trans-cinnamate biosynthesis; trans-cinnamate from L-phenylalanine: step 1/1. Its function is as follows. Phenylalanine aminomutase that catalyzes the rearrangement of L-phenylalanine to R-beta-phenylalanine. Catalyzes the first committed step in the biosynthesis of the side chain of the alkaloid taxol (paclitaxel), a widely-used compound with antitumor activity. Also has low phenylalanine ammonia-lyase activity. In Taxus canadensis (Canadian yew), this protein is Phenylalanine aminomutase (L-beta-phenylalanine forming) (pam).